Here is a 357-residue protein sequence, read N- to C-terminus: Phosphoribosylformylglycinamidine cyclo-ligase (357 aa).

It belongs to the AIR synthase family.

It is found in the cytoplasm. The enzyme catalyses 2-formamido-N(1)-(5-O-phospho-beta-D-ribosyl)acetamidine + ATP = 5-amino-1-(5-phospho-beta-D-ribosyl)imidazole + ADP + phosphate + H(+). The protein operates within purine metabolism; IMP biosynthesis via de novo pathway; 5-amino-1-(5-phospho-D-ribosyl)imidazole from N(2)-formyl-N(1)-(5-phospho-D-ribosyl)glycinamide: step 2/2. This Rhizobium etli (strain CIAT 652) protein is Phosphoribosylformylglycinamidine cyclo-ligase.